The chain runs to 591 residues: Inactive metallocarboxypeptidase ECM14 (591 aa).

The first 21 residues, 1–21 (MRLFARLEVLAILACAVPIAA), serve as a signal peptide directing secretion. The propeptide occupies 22 to 175 (IPSFLSNSYP…QTIYESYPSS (154 aa)). A Peptidase M14 domain is found at 203–523 (DYQPFSVIVT…NAVMVLGRFL (321 aa)). Zn(2+) contacts are provided by His-265 and Glu-268. Substrate contacts are provided by residues 265-268 (HARE), Arg-323, and 340-341 (DR). Cys-334 and Cys-357 are oxidised to a cystine. 2 N-linked (GlcNAc...) asparagine glycosylation sites follow: Asn-350 and Asn-381. Residue His-397 coordinates Zn(2+). 398–399 (SY) lines the substrate pocket. Residues 533 to 543 (DWEDESQRPKA) show a composition bias toward basic and acidic residues. A disordered region spans residues 533–591 (DWEDESQRPKADEDDIPSENELGENDDSWIPFDYRNHDDQNEGEGYDNDEWGFRRRRKG). 2 stretches are compositionally biased toward acidic residues: residues 544–559 (DEDD…ENDD) and 573–582 (NEGEGYDNDE).

The protein belongs to the peptidase M14 family. Zn(2+) serves as cofactor.

The protein resides in the vacuole. The protein localises to the secreted. Functionally, inactive carboxypeptidase that may play a role in cell wall organization and biogenesis. The protein is Inactive metallocarboxypeptidase ECM14 (ECM14) of Paracoccidioides lutzii (strain ATCC MYA-826 / Pb01) (Paracoccidioides brasiliensis).